The sequence spans 398 residues: 4-hydroxy-3-methylbut-2-enyl diphosphate reductase (398 aa).

A [4Fe-4S] cluster-binding site is contributed by C66. H96 provides a ligand contact to (2E)-4-hydroxy-3-methylbut-2-enyl diphosphate. Dimethylallyl diphosphate is bound at residue H96. H96 is a binding site for isopentenyl diphosphate. C157 is a binding site for [4Fe-4S] cluster. H185 is a (2E)-4-hydroxy-3-methylbut-2-enyl diphosphate binding site. H185 contacts dimethylallyl diphosphate. Position 185 (H185) interacts with isopentenyl diphosphate. Residue E187 is the Proton donor of the active site. Residue T250 participates in (2E)-4-hydroxy-3-methylbut-2-enyl diphosphate binding. C288 lines the [4Fe-4S] cluster pocket. 4 residues coordinate (2E)-4-hydroxy-3-methylbut-2-enyl diphosphate: S317, S318, N319, and S379. 4 residues coordinate dimethylallyl diphosphate: S317, S318, N319, and S379. Positions 317, 318, 319, and 379 each coordinate isopentenyl diphosphate.

This sequence belongs to the IspH family. The cofactor is [4Fe-4S] cluster.

The enzyme catalyses isopentenyl diphosphate + 2 oxidized [2Fe-2S]-[ferredoxin] + H2O = (2E)-4-hydroxy-3-methylbut-2-enyl diphosphate + 2 reduced [2Fe-2S]-[ferredoxin] + 2 H(+). The catalysed reaction is dimethylallyl diphosphate + 2 oxidized [2Fe-2S]-[ferredoxin] + H2O = (2E)-4-hydroxy-3-methylbut-2-enyl diphosphate + 2 reduced [2Fe-2S]-[ferredoxin] + 2 H(+). The protein operates within isoprenoid biosynthesis; dimethylallyl diphosphate biosynthesis; dimethylallyl diphosphate from (2E)-4-hydroxy-3-methylbutenyl diphosphate: step 1/1. It participates in isoprenoid biosynthesis; isopentenyl diphosphate biosynthesis via DXP pathway; isopentenyl diphosphate from 1-deoxy-D-xylulose 5-phosphate: step 6/6. Catalyzes the conversion of 1-hydroxy-2-methyl-2-(E)-butenyl 4-diphosphate (HMBPP) into a mixture of isopentenyl diphosphate (IPP) and dimethylallyl diphosphate (DMAPP). Acts in the terminal step of the DOXP/MEP pathway for isoprenoid precursor biosynthesis. The protein is 4-hydroxy-3-methylbut-2-enyl diphosphate reductase of Synechococcus sp. (strain CC9311).